A 309-amino-acid chain; its full sequence is MSALSSENINGVYIPSALLIFGTFIVKKEFVPYAVALTAILAGLKLFTGGSKPRKVLNPTEFQEFVLKEKTDISHNVCIYRFALPRPADILGLPIGQHISLAATIEGQPKEVVRSYTPISSDNEAGYFDLLVKAYPQGNISKYLTTLKIGDTMKVRGPKGAMVYTPNMCRHIGMIAGGTGITPMLQIIKAVIRNRPRNGGNDTTKLDLIFANVNPDDILLKEELDKLAAEDPDFNIYYVLNNPPQGWTGGVGFVTPEMIKEHLPAPASDVKILLCGPPPMISAMKKATESLGYTKARPVSKLEDQVFCF.

The chain crosses the membrane as a helical span at residues 30-50 (FVPYAVALTAILAGLKLFTGG). The FAD-binding FR-type domain occupies 60 to 165 (TEFQEFVLKE…RGPKGAMVYT (106 aa)). Residues 145–160 (TTLK…GPKG) and 171–208 (HIGM…KLDL) contribute to the FAD site.

It belongs to the flavoprotein pyridine nucleotide cytochrome reductase family. Monomer. Component of the 2-(3-amino-3-carboxypropyl)histidine synthase complex composed of dph1, dph2, dph3 and a NADH-dependent reductase, predominantly cbr1. FAD is required as a cofactor.

It localises to the mitochondrion outer membrane. It carries out the reaction 2 Fe(III)-[cytochrome b5] + NADH = 2 Fe(II)-[cytochrome b5] + NAD(+) + H(+). It catalyses the reaction 2 Fe(3+)-[Dph3] + NADH = 2 Fe(2+)-[Dph3] + NAD(+) + H(+). It functions in the pathway protein modification; peptidyl-diphthamide biosynthesis. In terms of biological role, NADH-dependent reductase for dph3 and cytochrome b5. Required for the first step of diphthamide biosynthesis, a post-translational modification of histidine which occurs in elongation factor 2. Dph1 and dph2 transfer a 3-amino-3-carboxypropyl (ACP) group from S-adenosyl-L-methionine (SAM) to a histidine residue, the reaction is assisted by a reduction system comprising dph3 and a NADH-dependent reductase, predominantly cbr1. By reducing dph3, also involved in the formation of the tRNA wobble base modification mcm5s 2U (5-methoxycarbonylmethyl-2-thiouridine), mediated by the elongator complex. The cytochrome b5/NADH cytochrome b5 reductase electron transfer system supports the catalytic activity of several sterol biosynthetic enzymes. The sequence is that of NADH-cytochrome b5 reductase 1 (cbr1) from Neosartorya fischeri (strain ATCC 1020 / DSM 3700 / CBS 544.65 / FGSC A1164 / JCM 1740 / NRRL 181 / WB 181) (Aspergillus fischerianus).